The primary structure comprises 246 residues: tRNA pseudouridine synthase A (246 aa).

Aspartate 52 serves as the catalytic Nucleophile. Tyrosine 111 contacts substrate.

Belongs to the tRNA pseudouridine synthase TruA family. Homodimer.

The enzyme catalyses uridine(38/39/40) in tRNA = pseudouridine(38/39/40) in tRNA. Its function is as follows. Formation of pseudouridine at positions 38, 39 and 40 in the anticodon stem and loop of transfer RNAs. In Ehrlichia ruminantium (strain Welgevonden), this protein is tRNA pseudouridine synthase A.